A 208-amino-acid chain; its full sequence is V-type ATP synthase subunit D (208 aa).

It belongs to the V-ATPase D subunit family.

In terms of biological role, produces ATP from ADP in the presence of a proton gradient across the membrane. This is V-type ATP synthase subunit D from Chlamydia abortus (strain DSM 27085 / S26/3) (Chlamydophila abortus).